The primary structure comprises 71 residues: Small ribosomal subunit protein bS18 (71 aa).

It belongs to the bacterial ribosomal protein bS18 family. In terms of assembly, part of the 30S ribosomal subunit. Forms a tight heterodimer with protein bS6.

Binds as a heterodimer with protein bS6 to the central domain of the 16S rRNA, where it helps stabilize the platform of the 30S subunit. The chain is Small ribosomal subunit protein bS18 from Nostoc sp. (strain PCC 7120 / SAG 25.82 / UTEX 2576).